The primary structure comprises 489 residues: Probable transporter MCH1 (489 aa).

12 helical membrane-spanning segments follow: residues 34–54 (ISLI…FTPV), 68–88 (IIGS…GYLA), 94–114 (VLLS…AATV), 124–144 (LAIS…TALL), 156–175 (LTIS…GSRV), 196–216 (FSFL…VVSI), 262–282 (ISTY…EMYI), 302–324 (VAIH…DFLV), 335–355 (LLSI…STFV), 359–379 (YYII…LYPT), 403–423 (IGST…CGVF), and 463–483 (SLII…ILRI).

This sequence belongs to the major facilitator superfamily.

The protein resides in the vacuole membrane. Its function is as follows. Probable transporter. This Wickerhamomyces anomalus (Yeast) protein is Probable transporter MCH1 (MCH1).